A 459-amino-acid polypeptide reads, in one-letter code: cAMP-dependent protein kinase regulatory subunit (459 aa).

The dimerization and phosphorylation stretch occupies residues 30–219; the sequence is QFCANYFNTK…TLANNLKNNF (190 aa). 2 disordered regions span residues 78–109 and 125–168; these read VNDR…DTKT and FDVK…PSSK. Residues 95–109 show a composition bias toward basic and acidic residues; sequence HSNHDEDPHAKDTKT. Low complexity predominate over residues 146–168; it reads KPSSSSQPNQQSASASSKTPSSK. S180 carries the post-translational modification Phosphoserine. 3',5'-cyclic AMP contacts are provided by residues 220–335, E285, R294, 338–454, E404, and R413; these read LFKQ…FLKD and VLKS…KSQD.

Belongs to the cAMP-dependent kinase regulatory chain family. As to quaternary structure, tetramer, composed of 2 regulatory (R) and 2 catalytic (C) subunits. In the presence of cAMP it dissociates into 2 active monomeric C subunits and an R dimer.

In Candida albicans (strain SC5314 / ATCC MYA-2876) (Yeast), this protein is cAMP-dependent protein kinase regulatory subunit (BCY1).